The sequence spans 277 residues: MNVFTTLQQFVPQQKISKVAGRLAASRHPWVKRTFIRSFAKAYDVSLDEYERQSLNAYESFNDFFTRELQDNARIIDASINGIVSPADGMISQLGQIHDHKLLQAKGRDYDIGQLLADSADGDYFADGSFATVYLAPSNYHRVHMPFDGILTKTRYVPGTLFSVNNTTAANVPDLFARNERLVCLFDTAYGKAAVVMVGAMIVAGIETVATGKISRTDDIQEADHDMSFKKGDELGRFYLGSTAIVVLPKAAKTDWQDTMQHGSIVQMGQLLGSAKT.

Residues D88, H144, and S242 each act as charge relay system; for autoendoproteolytic cleavage activity in the active site. The active-site Schiff-base intermediate with substrate; via pyruvic acid; for decarboxylase activity is S242. The residue at position 242 (S242) is a Pyruvic acid (Ser); by autocatalysis.

It belongs to the phosphatidylserine decarboxylase family. PSD-B subfamily. Prokaryotic type I sub-subfamily. As to quaternary structure, heterodimer of a large membrane-associated beta subunit and a small pyruvoyl-containing alpha subunit. Pyruvate is required as a cofactor. Is synthesized initially as an inactive proenzyme. Formation of the active enzyme involves a self-maturation process in which the active site pyruvoyl group is generated from an internal serine residue via an autocatalytic post-translational modification. Two non-identical subunits are generated from the proenzyme in this reaction, and the pyruvate is formed at the N-terminus of the alpha chain, which is derived from the carboxyl end of the proenzyme. The autoendoproteolytic cleavage occurs by a canonical serine protease mechanism, in which the side chain hydroxyl group of the serine supplies its oxygen atom to form the C-terminus of the beta chain, while the remainder of the serine residue undergoes an oxidative deamination to produce ammonia and the pyruvoyl prosthetic group on the alpha chain. During this reaction, the Ser that is part of the protease active site of the proenzyme becomes the pyruvoyl prosthetic group, which constitutes an essential element of the active site of the mature decarboxylase.

The protein resides in the cell membrane. The enzyme catalyses a 1,2-diacyl-sn-glycero-3-phospho-L-serine + H(+) = a 1,2-diacyl-sn-glycero-3-phosphoethanolamine + CO2. It functions in the pathway phospholipid metabolism; phosphatidylethanolamine biosynthesis; phosphatidylethanolamine from CDP-diacylglycerol: step 2/2. Functionally, catalyzes the formation of phosphatidylethanolamine (PtdEtn) from phosphatidylserine (PtdSer). The sequence is that of Phosphatidylserine decarboxylase proenzyme from Psychrobacter cryohalolentis (strain ATCC BAA-1226 / DSM 17306 / VKM B-2378 / K5).